The primary structure comprises 191 residues: Holliday junction branch migration complex subunit RuvA (191 aa).

Positions 1-64 (MIGRLSGVLL…EDAHILFGFG (64 aa)) are domain I. The domain II stretch occupies residues 65–137 (TNEERNVFKQ…LKGKLGADLG (73 aa)). Residues 137 to 141 (GVAGA) form a flexible linker region. Residues 142–191 (VATDATSDILNALLALGYSDKEAMLALKQVPAGTGVSDGIKLALKSLSKA) are domain III.

This sequence belongs to the RuvA family. In terms of assembly, homotetramer. Forms an RuvA(8)-RuvB(12)-Holliday junction (HJ) complex. HJ DNA is sandwiched between 2 RuvA tetramers; dsDNA enters through RuvA and exits via RuvB. An RuvB hexamer assembles on each DNA strand where it exits the tetramer. Each RuvB hexamer is contacted by two RuvA subunits (via domain III) on 2 adjacent RuvB subunits; this complex drives branch migration. In the full resolvosome a probable DNA-RuvA(4)-RuvB(12)-RuvC(2) complex forms which resolves the HJ.

It is found in the cytoplasm. Functionally, the RuvA-RuvB-RuvC complex processes Holliday junction (HJ) DNA during genetic recombination and DNA repair, while the RuvA-RuvB complex plays an important role in the rescue of blocked DNA replication forks via replication fork reversal (RFR). RuvA specifically binds to HJ cruciform DNA, conferring on it an open structure. The RuvB hexamer acts as an ATP-dependent pump, pulling dsDNA into and through the RuvAB complex. HJ branch migration allows RuvC to scan DNA until it finds its consensus sequence, where it cleaves and resolves the cruciform DNA. In Janthinobacterium sp. (strain Marseille) (Minibacterium massiliensis), this protein is Holliday junction branch migration complex subunit RuvA.